Reading from the N-terminus, the 4062-residue chain is Transcription-associated protein 1 (4062 aa).

Residues 531–562 (LASEPSTSEDADESGGDPNKLPPPTKEGKKTS) form a disordered region. 2 TPR repeats span residues 1346–1379 (LDGVQNYMFNCPDGFDFEKDMDMYKRYLSHLLDI) and 1677–1714 (RRSFIRRIIVYQSSGPLRQEFMDTPEYFEKLIDLDDEE). A compositionally biased stretch (basic and acidic residues) spans 2659–2670 (VETEMKREEPEP). The interval 2659–2692 (VETEMKREEPEPMEVDEKDSQDDSKDAGEPKEKE) is disordered. The segment covering 2671–2680 (MEVDEKDSQD) has biased composition (acidic residues). The segment covering 2681-2692 (DSKDAGEPKEKE) has biased composition (basic and acidic residues). The FAT domain maps to 2800-3411 (LIEFISSKHE…FYHIREAVSV (612 aa)). A TPR 3 repeat occupies 2847–2880 (IETLESLGTLYNEISEFDQFAAIWERRAVFPDTM). The region spanning 3682 to 4046 (EPNFEIVIKG…DCVSLISRAK (365 aa)) is the PI3K/PI4K catalytic domain. The G-loop stretch occupies residues 3688-3694 (VIKGGQV). Residues 3902 to 3910 (NLTPMGPDQ) form a catalytic loop region. Residues 3922–3950 (NPSYRFEIRGGRSLHDIQHFGHEVPFRLT) form an activation loop region. In terms of domain architecture, FATC spans 4031-4062 (AKLRKDDCVSLISRAKDSDNLARMPPTYHAWF).

Belongs to the PI3/PI4-kinase family. TRA1 subfamily. In terms of assembly, interacts with histone acetyltransferase Tip60 homolog mys-1. Probably a component of a complex with histone acetyltransferase (HAT) activity, at least composed of mys-1 and trr-1. In terms of tissue distribution, expressed in germ cells and somatic cells.

It is found in the nucleus. The protein localises to the chromosome. Influences germ cell fate in hermaphrodites. Acts downstream of tra-2 and tra-3 and through the Tip60 histone acetyltransferase complex to regulate germ cell fate decisions. Required for spermatogenesis and embryonic development. Acts with tra-2 to promote expression of fog-3 and control male tail development. Involved in the negative regulation of vulval development. Involved in the positive regulation of transcription factor daf-16, probably acting by histone acetylation; thereby modulating stress resistance. Plays a role in acetylation of nucleosomal histone H4, probably acting as a component of the Tip60 histone acetyltransferase complex. This Caenorhabditis elegans protein is Transcription-associated protein 1.